The following is a 301-amino-acid chain: Mycothiol acetyltransferase (301 aa).

2 N-acetyltransferase domains span residues 7-150 (VDWQ…PPVD) and 152-301 (VRFA…AVEG). D39 lines the 1D-myo-inositol 2-(L-cysteinylamino)-2-deoxy-alpha-D-glucopyranoside pocket. Residues 80 to 82 (LVV) and 88 to 93 (RRGIGS) each bind acetyl-CoA. The 1D-myo-inositol 2-(L-cysteinylamino)-2-deoxy-alpha-D-glucopyranoside site is built by E179, K220, and E228. Acetyl-CoA is bound at residue 232-234 (VGV). Y271 provides a ligand contact to 1D-myo-inositol 2-(L-cysteinylamino)-2-deoxy-alpha-D-glucopyranoside. 276 to 281 (NTAAVK) serves as a coordination point for acetyl-CoA.

This sequence belongs to the acetyltransferase family. MshD subfamily. Monomer.

It carries out the reaction 1D-myo-inositol 2-(L-cysteinylamino)-2-deoxy-alpha-D-glucopyranoside + acetyl-CoA = mycothiol + CoA + H(+). In terms of biological role, catalyzes the transfer of acetyl from acetyl-CoA to desacetylmycothiol (Cys-GlcN-Ins) to form mycothiol. This chain is Mycothiol acetyltransferase, found in Mycolicibacterium vanbaalenii (strain DSM 7251 / JCM 13017 / BCRC 16820 / KCTC 9966 / NRRL B-24157 / PYR-1) (Mycobacterium vanbaalenii).